A 219-amino-acid chain; its full sequence is Carboxypeptidase Y inhibitor (219 aa).

M1 is modified (N-acetylmethionine).

The protein belongs to the phosphatidylethanolamine-binding protein family. Monomer.

It localises to the cytoplasm. Functionally, specific and potent inhibitor of carboxypeptidase Y. The protein is Carboxypeptidase Y inhibitor (TFS1) of Saccharomyces cerevisiae (strain ATCC 204508 / S288c) (Baker's yeast).